Here is a 255-residue protein sequence, read N- to C-terminus: 5'-nucleotidase SurE (255 aa).

Residues D8, D9, S40, and N92 each coordinate a divalent metal cation.

Belongs to the SurE nucleotidase family. A divalent metal cation is required as a cofactor.

It localises to the cytoplasm. The catalysed reaction is a ribonucleoside 5'-phosphate + H2O = a ribonucleoside + phosphate. In terms of biological role, nucleotidase that shows phosphatase activity on nucleoside 5'-monophosphates. The sequence is that of 5'-nucleotidase SurE from Brucella suis (strain ATCC 23445 / NCTC 10510).